Here is a 473-residue protein sequence, read N- to C-terminus: Cannabinoid receptor 1 (473 aa).

Over Met-1 to Gln-118 the chain is Extracellular. A required for mitochondrial localization region spans residues Lys-2–Val-23. Residues Asn-79 and Asn-85 are each glycosylated (N-linked (GlcNAc...) asparagine). The chain crosses the membrane as a helical span at residues Leu-119 to Leu-144. At His-145–His-156 the chain is on the cytoplasmic side. The chain crosses the membrane as a helical span at residues Phe-157–Val-177. The Extracellular segment spans residues Asp-178 to Asn-189. The chain crosses the membrane as a helical span at residues Val-190 to Ile-214. The Cytoplasmic portion of the chain corresponds to Asp-215–Lys-234. Residues Ala-235–Trp-257 form a helical membrane-spanning segment. Residues Asn-258–Glu-275 lie on the Extracellular side of the membrane. The chain crosses the membrane as a helical span at residues Thr-276–Trp-301. The Cytoplasmic segment spans residues Lys-302–Thr-346. A helical membrane pass occupies residues Leu-347 to Tyr-367. Residues Asp-368–Thr-379 are Extracellular-facing. The helical transmembrane segment at Ile-380–Leu-401 threads the bilayer. The Cytoplasmic segment spans residues Arg-402 to Leu-473. Cys-417 carries the S-palmitoyl cysteine lipid modification.

It belongs to the G-protein coupled receptor 1 family. In terms of processing, palmitoylation at Cys-417 is important for recruitment at both plasma membrane and lipid rafts and association with G protein alpha subunits.

The protein localises to the cell membrane. It localises to the mitochondrion outer membrane. Its subcellular location is the cell projection. It is found in the axon. The protein resides in the presynapse. G-protein coupled receptor for cannabinoids. Mediates many cannabinoid-induced effects in the central nervous system (CNS), as well as in peripheral tissues. Regulates cellular respiration and energy production in response to cannabinoids. Signaling typically involves reduction in cyclic AMP. This Taeniopygia guttata (Zebra finch) protein is Cannabinoid receptor 1 (CNR1).